A 908-amino-acid chain; its full sequence is 26S proteasome non-ATPase regulatory subunit 2 (908 aa).

At Met-1 the chain carries N-acetylmethionine. The segment at 1–52 (MEEGGRDKAPVQPQQSPAAAPGGTDEKPSGKERRDAGDKDKEQELSEEDKQL) is disordered. Residues 10 to 21 (PVQPQQSPAAAP) show a composition bias toward low complexity. Position 16 is a phosphoserine (Ser-16). Thr-24 is subject to Phosphothreonine. Residues 24–52 (TDEKPSGKERRDAGDKDKEQELSEEDKQL) are compositionally biased toward basic and acidic residues. A phosphoserine mark is found at Ser-29 and Ser-147. Tyr-194 is modified (phosphotyrosine). Ser-361 and Ser-363 each carry phosphoserine. PC repeat units lie at residues 409–442 (SAAA…YIKS), 443–479 (GALL…TMRL), 480–514 (GSIF…SMEV), 517–551 (VTAL…TELK), and 560–589 (LGLG…PFRS). Lys-551 is subject to N6-acetyllysine. Over residues 623-643 (KEKEEDKDKKEKKDKDKKEAP) the composition is skewed to basic and acidic residues. The disordered stretch occupies residues 623-645 (KEKEEDKDKKEKKDKDKKEAPAD). 2 PC repeats span residues 692–723 (LALA…EVSY) and 742–757 (AAML…KDPN). Residues 708-903 (DTLSKFSHDA…LEGFVILRKN (196 aa)) are required for interaction with UBLCP1.

The protein belongs to the proteasome subunit S2 family. As to quaternary structure, component of the 19S proteasome regulatory particle complex. The 26S proteasome consists of a 20S core particle (CP) and two 19S regulatory subunits (RP). The regulatory particle is made of a lid composed of 9 subunits, a base containing 6 ATPases and few additional components including PSMD2. Interacts with RPGRIP1L. Interacts with CRY1 in a KDM8-dependent manner. Interacts (via C-terminus) with phosphatase UBLCP1 (via ubiquitin-like domain); the interaction recruits UBLCP1 to the 19S regulatory particle where it dephosphorylates 19S subunit PSMC2/RPT1 which impairs PSMC2 ATPase activity and disrupts 26S proteasome assembly. In terms of tissue distribution, found in skeletal muscle, liver, heart, brain, kidney, pancreas, lung and placenta.

Component of the 26S proteasome, a multiprotein complex involved in the ATP-dependent degradation of ubiquitinated proteins. This complex plays a key role in the maintenance of protein homeostasis by removing misfolded or damaged proteins, which could impair cellular functions, and by removing proteins whose functions are no longer required. Therefore, the proteasome participates in numerous cellular processes, including cell cycle progression, apoptosis, or DNA damage repair. In terms of biological role, binds to the intracellular domain of tumor necrosis factor type 1 receptor. The binding domain of TRAP1 and TRAP2 resides outside the death domain of TNFR1. This Homo sapiens (Human) protein is 26S proteasome non-ATPase regulatory subunit 2 (PSMD2).